The following is a 300-amino-acid chain: MKIAILSRDGTLYSCKRLREAAIQRGHLVEILDPLSCYMNINPAASSIHYKGRKLPHFDAVIPRIGTAITFYGTAALRQFEMLGSYPLNESVAIARARDKLRSMQLLARQGIDLPVTGIAHSPDDTSDLIDMVGGAPLVVKLVEGTQGIGVVLAETRQAAESVIDAFRGLNAHILVQEYIKEAQGCDIRCLVVGDEVVAAIERRAKEGDFRSNLHRGGAASVASITPQEREIAIKAARTMALDVAGVDILRANRGPLVMEVNASPGLEGIEKTTGIDIAGKMIRWIERHATTEYCLKTGG.

Residues 104-287 form the ATP-grasp domain; the sequence is MQLLARQGID…IAGKMIRWIE (184 aa). Residues Lys141, 178–179, Asp187, and 211–213 each bind ATP; these read EY and RSN. Asp248, Glu260, and Asn262 together coordinate Mg(2+). Positions 248, 260, and 262 each coordinate Mn(2+).

The protein belongs to the RimK family. Requires Mg(2+) as cofactor. Mn(2+) is required as a cofactor.

In terms of biological role, an L-glutamate ligase that catalyzes the ATP-dependent post-translational addition of glutamate residues to the C-terminus of ribosomal protein bS6 (RpsF). Is also able to catalyze the synthesis of poly-alpha-glutamate in vitro, via ATP hydrolysis from unprotected glutamate as substrate. The number of glutamate residues added to either RpsF or to poly-alpha-glutamate changes with pH. In Shigella dysenteriae serotype 1 (strain Sd197), this protein is Ribosomal protein bS6--L-glutamate ligase.